Here is a 194-residue protein sequence, read N- to C-terminus: Granulocyte colony-stimulating factor (194 aa).

The N-terminal stretch at 1–20 (KLMALQLLLWHSALWMVQEA) is a signal peptide. Cystine bridges form between cysteine 56-cysteine 62 and cysteine 84-cysteine 94. Threonine 153 carries an O-linked (GalNAc...) threonine glycan.

Belongs to the IL-6 superfamily. Monomer. Post-translationally, O-glycosylated.

It localises to the secreted. Granulocyte/macrophage colony-stimulating factors are cytokines that act in hematopoiesis by controlling the production, differentiation, and function of 2 related white cell populations of the blood, the granulocytes and the monocytes-macrophages. This CSF induces granulocytes. This Felis catus (Cat) protein is Granulocyte colony-stimulating factor (CSF3).